The sequence spans 447 residues: Tubulin beta-1 chain (447 aa).

Residue glutamine 11 participates in GTP binding. Serine 40 carries the phosphoserine modification. 7 residues coordinate GTP: glutamate 69, serine 138, glycine 142, threonine 143, glycine 144, asparagine 204, and asparagine 226. Residue glutamate 69 coordinates Mg(2+). Serine 339 bears the Phosphoserine mark. The disordered stretch occupies residues 427–447 (EATADEDAEFEEEQEAEVDEN). A compositionally biased stretch (acidic residues) spans 429–447 (TADEDAEFEEEQEAEVDEN).

The protein belongs to the tubulin family. As to quaternary structure, dimer of alpha and beta chains. A typical microtubule is a hollow water-filled tube with an outer diameter of 25 nm and an inner diameter of 15 nM. Alpha-beta heterodimers associate head-to-tail to form protofilaments running lengthwise along the microtubule wall with the beta-tubulin subunit facing the microtubule plus end conferring a structural polarity. Microtubules usually have 13 protofilaments but different protofilament numbers can be found in some organisms and specialized cells. Interacts with mgr and Vhl. Mg(2+) serves as cofactor.

Its subcellular location is the cytoplasm. The protein resides in the cytoskeleton. Its function is as follows. Tubulin is the major constituent of microtubules, a cylinder consisting of laterally associated linear protofilaments composed of alpha- and beta-tubulin heterodimers. Microtubules grow by the addition of GTP-tubulin dimers to the microtubule end, where a stabilizing cap forms. Below the cap, tubulin dimers are in GDP-bound state, owing to GTPase activity of alpha-tubulin. This Drosophila melanogaster (Fruit fly) protein is Tubulin beta-1 chain (betaTub56D).